We begin with the raw amino-acid sequence, 571 residues long: Septation ring formation regulator EzrA (571 aa).

Residues 1-3 (MYY) are Extracellular-facing. Residues 4–22 (MLIGFIIVVIAVIGAGYIL) form a helical membrane-spanning segment. Residues 23–571 (KRKHYQRINE…ESKVSVDDIE (549 aa)) are Cytoplasmic-facing. 4 coiled-coil regions span residues 248–298 (LAQM…DTLE), 326–374 (DALA…ASGE), 400–437 (KFAE…ERER), and 478–529 (RIAE…ENHF).

The protein belongs to the EzrA family.

Its subcellular location is the cell membrane. Its function is as follows. Negative regulator of FtsZ ring formation; modulates the frequency and position of FtsZ ring formation. Inhibits FtsZ ring formation at polar sites. Interacts either with FtsZ or with one of its binding partners to promote depolymerization. This is Septation ring formation regulator EzrA from Listeria monocytogenes serotype 4b (strain CLIP80459).